The following is a 223-amino-acid chain: Twisted gastrulation protein homolog 1 (223 aa).

Positions 1–25 (MKLHYVAVLTLAILMFLTWLPESLS) are cleaved as a signal peptide. Residues Asn-52 and Asn-81 are each glycosylated (N-linked (GlcNAc...) asparagine).

The protein belongs to the twisted gastrulation protein family. As to quaternary structure, interacts with CHRD and BMP4. This interaction enhances CHRD/BMP4 complex formation. Interacts with BMP7.

It localises to the secreted. Functionally, may be involved in dorsoventral axis formation. Seems to antagonize BMP signaling by forming ternary complexes with CHRD and BMPs, thereby preventing BMPs from binding to their receptors. In addition to the anti-BMP function, also has pro-BMP activity, partly mediated by cleavage and degradation of CHRD, which releases BMPs from ternary complexes. May be an important modulator of BMP-regulated cartilage development and chondrocyte differentiation. May play a role in thymocyte development. This Homo sapiens (Human) protein is Twisted gastrulation protein homolog 1 (TWSG1).